Here is a 50-residue protein sequence, read N- to C-terminus: PhoP/PhoQ regulator MgrB (50 aa).

Topologically, residues 1 to 4 are cytoplasmic; sequence MLDL. The helical transmembrane segment at 5-27 threads the bilayer; it reads NITKLVTTVVIIAACCLFYLLAL. Residues 28–50 are Periplasmic-facing; sequence DSYCDQGGTFSTGICAITTIVPW.

This sequence belongs to the MgrB family. Probably interacts with the periplasmic domain of PhoQ.

The protein resides in the cell inner membrane. Functionally, phoP-regulated transcription is redox-sensitive, being activated when the periplasm becomes more reducing. MgrB acts between DsbA/DsbB and PhoP/PhoQ in this pathway. Represses PhoP/PhoQ signaling, possibly by binding to the periplasmic domain of PhoQ, altering its activity and that of downstream effector PhoP. In Yersinia pestis, this protein is PhoP/PhoQ regulator MgrB.